Consider the following 1011-residue polypeptide: Protein argonaute 1C (1011 aa).

Over residues 1–11 the composition is skewed to basic residues; it reads MASRRPTHRHH. 2 disordered regions span residues 1–95 and 107–147; these read MASR…SPLA and RPSE…PLRP. 2 stretches are compositionally biased toward low complexity: residues 28 to 53 and 61 to 92; these read ARYA…ARGA and QQQQ…ASSS. Residues 127–140 show a composition bias toward polar residues; that stretch reads ATTTPHHIPSSSKS. The PAZ domain maps to 352–462; that stretch reads PVIDFVAQLL…LPMEVCKIVE (111 aa). The Piwi domain maps to 638 to 959; the sequence is LLIGILPDNN…AAFRARFYME (322 aa). A compositionally biased stretch (low complexity) spans 963-982; the sequence is SDSSSVVSGPGVRGPLSGSS. Residues 963-994 are disordered; it reads SDSSSVVSGPGVRGPLSGSSTSRTRAPGGAAV.

It belongs to the argonaute family. Ago subfamily.

In terms of biological role, probably involved in the RNA silencing pathway. May bind to short RNAs such as microRNAs (miRNAs) or short interfering RNAs (siRNAs), and represses the translation of mRNAs which are complementary to them. The polypeptide is Protein argonaute 1C (AGO1C) (Oryza sativa subsp. japonica (Rice)).